The following is a 421-amino-acid chain: UDP-N-acetylglucosamine 1-carboxyvinyltransferase (421 aa).

22-23 (KN) is a phosphoenolpyruvate binding site. Residue Arg-91 participates in UDP-N-acetyl-alpha-D-glucosamine binding. Catalysis depends on Cys-115, which acts as the Proton donor. 2-(S-cysteinyl)pyruvic acid O-phosphothioketal is present on Cys-115. UDP-N-acetyl-alpha-D-glucosamine is bound by residues 120 to 124 (RPVDL), 160 to 163 (KVSV), Asp-305, and Ile-327.

It belongs to the EPSP synthase family. MurA subfamily.

It is found in the cytoplasm. The catalysed reaction is phosphoenolpyruvate + UDP-N-acetyl-alpha-D-glucosamine = UDP-N-acetyl-3-O-(1-carboxyvinyl)-alpha-D-glucosamine + phosphate. It functions in the pathway cell wall biogenesis; peptidoglycan biosynthesis. In terms of biological role, cell wall formation. Adds enolpyruvyl to UDP-N-acetylglucosamine. This Photorhabdus laumondii subsp. laumondii (strain DSM 15139 / CIP 105565 / TT01) (Photorhabdus luminescens subsp. laumondii) protein is UDP-N-acetylglucosamine 1-carboxyvinyltransferase.